The chain runs to 276 residues: Large ribosomal subunit protein uL2 (276 aa).

The disordered stretch occupies residues 222-276 (GVAMNPIDHPLGGGEGRSSGGRHPVSPWGMPTKGYKTRDRKKASSKLIIKRRGQK). Basic residues predominate over residues 259-276 (RDRKKASSKLIIKRRGQK).

Belongs to the universal ribosomal protein uL2 family. As to quaternary structure, part of the 50S ribosomal subunit. Forms a bridge to the 30S subunit in the 70S ribosome.

One of the primary rRNA binding proteins. Required for association of the 30S and 50S subunits to form the 70S ribosome, for tRNA binding and peptide bond formation. It has been suggested to have peptidyltransferase activity; this is somewhat controversial. Makes several contacts with the 16S rRNA in the 70S ribosome. In Nitratidesulfovibrio vulgaris (strain ATCC 29579 / DSM 644 / CCUG 34227 / NCIMB 8303 / VKM B-1760 / Hildenborough) (Desulfovibrio vulgaris), this protein is Large ribosomal subunit protein uL2.